A 283-amino-acid chain; its full sequence is Phosphatidylglycerol--prolipoprotein diacylglyceryl transferase (283 aa).

7 helical membrane-spanning segments follow: residues 18 to 38, 62 to 82, 106 to 126, 136 to 156, 190 to 210, 218 to 238, and 252 to 272; these read LGGI…VVAF, YFLW…VLIY, FIGI…IASY, LLIY…FGRI, PSQL…VMWA, GLLI…AEFY, and LSMG…ILLY. Arg155 lines the a 1,2-diacyl-sn-glycero-3-phospho-(1'-sn-glycerol) pocket.

This sequence belongs to the Lgt family.

The protein localises to the cell inner membrane. The catalysed reaction is L-cysteinyl-[prolipoprotein] + a 1,2-diacyl-sn-glycero-3-phospho-(1'-sn-glycerol) = an S-1,2-diacyl-sn-glyceryl-L-cysteinyl-[prolipoprotein] + sn-glycerol 1-phosphate + H(+). It participates in protein modification; lipoprotein biosynthesis (diacylglyceryl transfer). In terms of biological role, catalyzes the transfer of the diacylglyceryl group from phosphatidylglycerol to the sulfhydryl group of the N-terminal cysteine of a prolipoprotein, the first step in the formation of mature lipoproteins. The sequence is that of Phosphatidylglycerol--prolipoprotein diacylglyceryl transferase from Helicobacter pylori (strain J99 / ATCC 700824) (Campylobacter pylori J99).